The following is a 640-amino-acid chain: Choline O-acetyltransferase (640 aa).

The span at 1–22 shows a compositional bias: basic and acidic residues; the sequence is MPDLEKDMQKKEKDSRSKDEPA. The segment at 1–28 is disordered; the sequence is MPDLEKDMQKKEKDSRSKDEPAVPKLPV. His-334 serves as the catalytic Proton acceptor. CoA contacts are provided by residues 412 to 424, Ser-450, and Gln-551; that span reads GKEF…TSPD.

It belongs to the carnitine/choline acetyltransferase family. As to expression, detected in brain and in embryonic retina.

The enzyme catalyses choline + acetyl-CoA = acetylcholine + CoA. Its function is as follows. Catalyzes the reversible synthesis of acetylcholine (ACh) from acetyl CoA and choline at cholinergic synapses. This is Choline O-acetyltransferase (CHAT) from Gallus gallus (Chicken).